We begin with the raw amino-acid sequence, 62 residues long: Alpha-conotoxin-like Qc1.2 (62 aa).

Positions 1–21 are cleaved as a signal peptide; the sequence is MGMRMMFTVFLLVALATTVAS. A propeptide spanning residues 22-48 is cleaved from the precursor; the sequence is FTLDRASNGRNAAADDKPSDWIALAIK. Position 49 is a pyrrolidone carboxylic acid (glutamine 49). Disulfide bonds link cysteine 50–cysteine 56 and cysteine 51–cysteine 61.

Belongs to the conotoxin A superfamily. In terms of tissue distribution, expressed by the venom duct.

The protein localises to the secreted. Its function is as follows. Alpha-conotoxins bind to the nicotinic acetylcholine receptors (nAChR) and inhibit them. This synthetic peptide (10 uM) selectively, but weakly inhibits both rat neuronal alpha-3-beta-2/CHRNA3-CHRNB2 (63%) and alpha-3-beta-4/CHRNA3-CHRNB4 (37%) subtypes of nAChR. This Conus quercinus (Oak cone) protein is Alpha-conotoxin-like Qc1.2.